Reading from the N-terminus, the 126-residue chain is Glycine--tRNA ligase beta subunit (126 aa).

The protein belongs to the class-II aminoacyl-tRNA synthetase family. Tetramer of two alpha and two beta subunits.

It is found in the cytoplasm. The catalysed reaction is tRNA(Gly) + glycine + ATP = glycyl-tRNA(Gly) + AMP + diphosphate. The chain is Glycine--tRNA ligase beta subunit (glyS) from Neisseria gonorrhoeae.